The chain runs to 372 residues: MSAHVATLHPEPPFALCGPRGTLIARGVRTRYCDVRAAQAALRSGTAPILLGALPFDVSRPAALMVPDGVLRARKLPDWPTGPLPKVRVAAALPPPADYLTRIGRARDLLAAFDGPLHKVVLARAVQLTADAPLDARVLLRRLVVADPTAYGYLVDLTSAGNDDTGAALVGASPELLVARSGNRVMCKPFAGSAPRAADPKLDAANAAALASSAKNRHEHQLVVDTMRVALEPLCEDLTIPAQPQLNRTAAVWHLCTAITGRLRNISTTAIDLALALHPTPAVGGVPTKAATELIAELEGDRGFYAGAVGWCDGRGDGHWVVSIRCAQLSADRRAALAHAGGGIVAESDPDDELEETTTKFATILTALGVEQ.

Lys-119 functions as the Proton acceptor in the catalytic mechanism. Catalysis depends on Glu-175, which acts as the Proton donor. Mg(2+) is bound by residues Glu-219 and Glu-356.

The protein belongs to the isochorismate synthase family. The cofactor is Mg(2+).

It carries out the reaction chorismate = isochorismate. It participates in quinol/quinone metabolism; 1,4-dihydroxy-2-naphthoate biosynthesis; 1,4-dihydroxy-2-naphthoate from chorismate: step 1/7. It functions in the pathway quinol/quinone metabolism; menaquinone biosynthesis. Its function is as follows. Catalyzes the conversion of chorismate to isochorismate. The chain is Putative isochorismate synthase MenF (menF) from Mycobacterium tuberculosis (strain CDC 1551 / Oshkosh).